A 308-amino-acid polypeptide reads, in one-letter code: Probable inositol oxygenase (308 aa).

Residues Arg49 and 106-108 each bind substrate; that span reads DDS. Fe cation-binding residues include His119, His144, and Asp145. Substrate-binding positions include Lys148 and 165–166; that span reads GD. Fe cation-binding residues include His217, His243, and Asp276. Residue 243–244 coordinates substrate; the sequence is HS.

Belongs to the myo-inositol oxygenase family. Fe cation is required as a cofactor.

It localises to the cytoplasm. It catalyses the reaction myo-inositol + O2 = D-glucuronate + H2O + H(+). It functions in the pathway polyol metabolism; myo-inositol degradation into D-glucuronate; D-glucuronate from myo-inositol: step 1/1. Functionally, involved in the biosynthesis of UDP-glucuronic acid (UDP-GlcA), providing nucleotide sugars for cell-wall polymers. May be also involved in plant ascorbate biosynthesis. The protein is Probable inositol oxygenase of Oryza sativa subsp. japonica (Rice).